The sequence spans 312 residues: Structure-specific endonuclease subunit SLX1 (312 aa).

In terms of domain architecture, GIY-YIG spans 9–92 (DFYGCYLLQS…QHGYQTRYIK (84 aa)). An SLX1-type zinc finger spans residues 219 to 282 (CQFCNKIIKH…IPQSPKCPKC (64 aa)).

It belongs to the SLX1 family. In terms of assembly, forms a heterodimer with SLX4. A divalent metal cation is required as a cofactor.

The protein localises to the nucleus. In terms of biological role, catalytic subunit of the SLX1-SLX4 structure-specific endonuclease that resolves DNA secondary structures generated during DNA repair and recombination. Has endonuclease activity towards branched DNA substrates, introducing single-strand cuts in duplex DNA close to junctions with ss-DNA. This is Structure-specific endonuclease subunit SLX1 from Candida glabrata (strain ATCC 2001 / BCRC 20586 / JCM 3761 / NBRC 0622 / NRRL Y-65 / CBS 138) (Yeast).